A 311-amino-acid polypeptide reads, in one-letter code: Inositol oxygenase 1 (311 aa).

Over residues 1-11 (MTILIDRHSDQ) the composition is skewed to basic and acidic residues. The disordered stretch occupies residues 1–29 (MTILIDRHSDQNDAGDEIVEKNQGNGKEE). Residues R52 and 109-111 (DES) contribute to the substrate site. 3 residues coordinate Fe cation: H122, H147, and D148. Substrate is bound by residues K151 and 168 to 169 (GD). Fe cation-binding residues include H220, H246, and D279. Position 246–247 (246–247 (HS)) interacts with substrate.

This sequence belongs to the myo-inositol oxygenase family. Fe cation is required as a cofactor. In terms of tissue distribution, expressed in roots, young leaves, stems, flowers and siliques.

The protein localises to the cytoplasm. The catalysed reaction is myo-inositol + O2 = D-glucuronate + H2O + H(+). It functions in the pathway polyol metabolism; myo-inositol degradation into D-glucuronate; D-glucuronate from myo-inositol: step 1/1. Its function is as follows. Catalyzes the oxygenative cleavage of myo-inositol to D-glucuronate. Involved in the biosynthesis of UDP-glucuronic acid (UDP-GlcA), providing nucleotide sugars for cell-wall polymers. May be also involved in plant ascorbate biosynthesis. The protein is Inositol oxygenase 1 (MIOX1) of Arabidopsis thaliana (Mouse-ear cress).